We begin with the raw amino-acid sequence, 183 residues long: Large ribosomal subunit protein uL6 (183 aa).

Belongs to the universal ribosomal protein uL6 family. As to quaternary structure, part of the 50S ribosomal subunit.

In terms of biological role, this protein binds to the 23S rRNA, and is important in its secondary structure. It is located near the subunit interface in the base of the L7/L12 stalk, and near the tRNA binding site of the peptidyltransferase center. The sequence is that of Large ribosomal subunit protein uL6 from Chlamydia trachomatis serovar A (strain ATCC VR-571B / DSM 19440 / HAR-13).